Here is a 315-residue protein sequence, read N- to C-terminus: Acetyl-coenzyme A carboxylase carboxyl transferase subunit alpha (315 aa).

A CoA carboxyltransferase C-terminal domain is found at 40-293; it reads LEDKKIALTK…KKNVLAALDR (254 aa).

It belongs to the AccA family. As to quaternary structure, acetyl-CoA carboxylase is a heterohexamer composed of biotin carboxyl carrier protein (AccB), biotin carboxylase (AccC) and two subunits each of ACCase subunit alpha (AccA) and ACCase subunit beta (AccD).

It localises to the cytoplasm. The enzyme catalyses N(6)-carboxybiotinyl-L-lysyl-[protein] + acetyl-CoA = N(6)-biotinyl-L-lysyl-[protein] + malonyl-CoA. It functions in the pathway lipid metabolism; malonyl-CoA biosynthesis; malonyl-CoA from acetyl-CoA: step 1/1. In terms of biological role, component of the acetyl coenzyme A carboxylase (ACC) complex. First, biotin carboxylase catalyzes the carboxylation of biotin on its carrier protein (BCCP) and then the CO(2) group is transferred by the carboxyltransferase to acetyl-CoA to form malonyl-CoA. This chain is Acetyl-coenzyme A carboxylase carboxyl transferase subunit alpha, found in Marinomonas sp. (strain MWYL1).